The following is a 649-amino-acid chain: V-type ATP synthase subunit I (649 aa).

The next 7 helical transmembrane spans lie at 312-332 (FLSF…GLIF), 360-380 (FMIL…FFGV), 455-475 (DNIL…LGML), 485-505 (IGWV…LQAV), 520-540 (GQVG…GGII), 556-576 (VFSD…GAMV), and 593-613 (VLII…GGVI).

Belongs to the V-ATPase 116 kDa subunit family.

It localises to the cell membrane. Produces ATP from ADP in the presence of a proton gradient across the membrane. The sequence is that of V-type ATP synthase subunit I (atpI) from Chlamydia muridarum (strain MoPn / Nigg).